The primary structure comprises 73 residues: Heterin-2 (73 aa).

The first 22 residues, 1–22 (MQYKTFLVIFLAYLLVTEEALA), serve as a signal peptide directing secretion. The propeptide occupies 47-73 (KRALKNIFDPYQKNLDLELERLLSQLQ).

It belongs to the non-disulfide-bridged peptide (NDBP) superfamily. Medium-length antimicrobial peptide (group 3) family. In terms of tissue distribution, expressed by the venom gland.

The protein resides in the secreted. The protein localises to the target cell membrane. Amphipathic peptide with potent activities against Gram-positive bacteria (MIC=5.6-30.0 uM) and weaker activities against the tested Gram-negative bacteria (MIC=15 uM to &gt;45 uM). It has high hemolytic activity against human erythrocytes. May act by disrupting the integrity of the bacterial cell membrane. The polypeptide is Heterin-2 (Heterometrus spinifer (Asia giant forest scorpion)).